The primary structure comprises 458 residues: Dihydrolipoyl dehydrogenase (458 aa).

Residues Asp30–Cys38, Lys47, and Ala112 each bind FAD. Cys38 and Cys43 form a disulfide bridge. NAD(+)-binding positions include Gly177–Ile181, Glu200, and Ala263–Arg266. Residues Asp305 and Ala313 each contribute to the FAD site. Catalysis depends on His437, which acts as the Proton acceptor.

It belongs to the class-I pyridine nucleotide-disulfide oxidoreductase family. In terms of assembly, homodimer. It depends on FAD as a cofactor.

The protein localises to the cytoplasm. It catalyses the reaction N(6)-[(R)-dihydrolipoyl]-L-lysyl-[protein] + NAD(+) = N(6)-[(R)-lipoyl]-L-lysyl-[protein] + NADH + H(+). Its pathway is ketone degradation; acetoin degradation. The polypeptide is Dihydrolipoyl dehydrogenase (acoL) (Bacillus subtilis (strain 168)).